We begin with the raw amino-acid sequence, 653 residues long: Rab11 family-interacting protein 5 (653 aa).

In terms of domain architecture, C2 spans Arg5 to Tyr146. A phosphoserine mark is found at Ser176, Ser283, Ser286, Ser307, Ser357, and Ser367. A disordered region spans residues Gly269–Phe300. Residues Arg277–Ser286 show a composition bias toward polar residues. Disordered stretches follow at residues His342–Gly402 and Pro415–Leu548. Positions Ser357–Leu368 are enriched in low complexity. Residues Phe375–Trp387 show a composition bias toward basic and acidic residues. 2 positions are modified to phosphoserine: Ser391 and Ser395. 2 stretches are compositionally biased toward basic and acidic residues: residues Pro420–Glu430 and Val447–Pro460. Residues Ser494, Ser538, Ser547, and Ser553 each carry the phosphoserine modification. The region spanning Lys586 to Pro648 is the FIP-RBD domain.

Interacts with RAB11FIP4. Interacts with NAPG. Interacts with RO60. Interacts with RAB11A that has been activated by GTP binding. In terms of assembly, (Microbial infection) Interacts with Kaposi's sarcoma-associated herpesvirus/HHV-8 protein ORF45; this interaction results in the lysosomal degradation of ORF45 and the inhibition of viral particle release. Post-translationally, phosphorylated on serine and threonine residues. Phosphorylation at Ser-357 is PKA-dependent. As to expression, detected at low levels in heart, brain, placenta, lung, liver, adipocytes, kidney, spleen, skeletal muscle and pancreas.

It is found in the cytoplasm. The protein resides in the recycling endosome membrane. Its subcellular location is the early endosome membrane. It localises to the golgi apparatus membrane. The protein localises to the cytoplasmic vesicle. It is found in the secretory vesicle membrane. The protein resides in the mitochondrion membrane. Rab effector involved in protein trafficking from apical recycling endosomes to the apical plasma membrane. Involved in insulin granule exocytosis. May regulate V-ATPase intracellular transport in response to extracellular acidosis. The chain is Rab11 family-interacting protein 5 from Homo sapiens (Human).